The following is a 64-amino-acid chain: UPF0434 protein BAB2_0345 (64 aa).

The protein belongs to the UPF0434 family.

The chain is UPF0434 protein BAB2_0345 from Brucella abortus (strain 2308).